The sequence spans 411 residues: UDP-N-acetylmuramoylalanine--D-glutamate ligase (411 aa).

92–98 (GTDGKST) serves as a coordination point for ATP.

The protein belongs to the MurCDEF family.

It localises to the cytoplasm. It carries out the reaction UDP-N-acetyl-alpha-D-muramoyl-L-alanine + D-glutamate + ATP = UDP-N-acetyl-alpha-D-muramoyl-L-alanyl-D-glutamate + ADP + phosphate + H(+). It participates in cell wall biogenesis; peptidoglycan biosynthesis. Cell wall formation. Catalyzes the addition of glutamate to the nucleotide precursor UDP-N-acetylmuramoyl-L-alanine (UMA). This is UDP-N-acetylmuramoylalanine--D-glutamate ligase from Hydrogenobaculum sp. (strain Y04AAS1).